Consider the following 248-residue polypeptide: NADP-dependent 3-hydroxy acid dehydrogenase YdfG (248 aa).

Residues 7–12 (GATAGF), 32–33 (RR), 54–55 (DV), and N81 each bind NADP(+). S134 lines the substrate pocket. NADP(+) is bound by residues Y147, K151, and 177–185 (PGLVGGTEF). Y147 (proton acceptor) is an active-site residue.

This sequence belongs to the short-chain dehydrogenases/reductases (SDR) family. In terms of assembly, homotetramer.

It carries out the reaction 3-hydroxypropanoate + NADP(+) = 3-oxopropanoate + NADPH + H(+). The enzyme catalyses L-allo-threonine + NADP(+) = aminoacetone + CO2 + NADPH. In terms of biological role, NADP-dependent dehydrogenase with broad substrate specificity acting on 3-hydroxy acids. Catalyzes the NADP-dependent oxidation of L-allo-threonine to L-2-amino-3-keto-butyrate, which is spontaneously decarboxylated into aminoacetone. Also acts on D-threonine, L-serine, D-serine, D-3-hydroxyisobutyrate, L-3-hydroxyisobutyrate, D-glycerate and L-glycerate. Able to catalyze the reduction of the malonic semialdehyde to 3-hydroxypropionic acid. YdfG is apparently supplementing RutE, the presumed malonic semialdehyde reductase involved in pyrimidine degradation since both are able to detoxify malonic semialdehyde. The sequence is that of NADP-dependent 3-hydroxy acid dehydrogenase YdfG from Shigella flexneri.